We begin with the raw amino-acid sequence, 319 residues long: Ferrochelatase (319 aa).

Positions 194 and 275 each coordinate Fe cation.

The protein belongs to the ferrochelatase family.

The protein resides in the cytoplasm. The enzyme catalyses heme b + 2 H(+) = protoporphyrin IX + Fe(2+). It functions in the pathway porphyrin-containing compound metabolism; protoheme biosynthesis; protoheme from protoporphyrin-IX: step 1/1. Its function is as follows. Catalyzes the ferrous insertion into protoporphyrin IX. This chain is Ferrochelatase, found in Vibrio vulnificus (strain YJ016).